Consider the following 310-residue polypeptide: Putative S-adenosyl-L-methionine-dependent methyltransferase Mb0151 (310 aa).

S-adenosyl-L-methionine-binding positions include Asp-132 and 161-162 (DL).

This sequence belongs to the UPF0677 family.

Its function is as follows. Exhibits S-adenosyl-L-methionine-dependent methyltransferase activity. In Mycobacterium bovis (strain ATCC BAA-935 / AF2122/97), this protein is Putative S-adenosyl-L-methionine-dependent methyltransferase Mb0151.